The chain runs to 185 residues: Lysozyme g (185 aa).

The residue at position 1 (Gln-1) is a Pyrrolidone carboxylic acid. 2 cysteine pairs are disulfide-bonded: Cys-4–Cys-60 and Cys-18–Cys-29. Active-site residues include Glu-73 and Asp-86.

Belongs to the glycosyl hydrolase 23 family.

The protein localises to the secreted. The catalysed reaction is Hydrolysis of (1-&gt;4)-beta-linkages between N-acetylmuramic acid and N-acetyl-D-glucosamine residues in a peptidoglycan and between N-acetyl-D-glucosamine residues in chitodextrins.. The sequence is that of Lysozyme g from Casuarius casuarius (Southern cassowary).